Reading from the N-terminus, the 672-residue chain is Spermatid perinuclear RNA-binding protein (672 aa).

The 359-residue stretch at 5–363 (RSFANDDRHV…ALKRPFEDGL (359 aa)) folds into the DZF domain. The disordered stretch occupies residues 349-371 (GAGSSALKRPFEDGLGDDKDPNK). A compositionally biased stretch (basic and acidic residues) spans 357 to 371 (RPFEDGLGDDKDPNK). The region spanning 387–453 (DLMNALMRLN…AVKVLQAMGY (67 aa)) is the DRBM 1 domain. Residues 467–476 (DEKSDNESKN) are compositionally biased toward basic and acidic residues. Positions 467–514 (DEKSDNESKNDTVSSNSSNNTGNSTTETSSTLEVRTQGPILTASGKNP) are disordered. Over residues 477–497 (DTVSSNSSNNTGNSTTETSST) the composition is skewed to low complexity. In terms of domain architecture, DRBM 2 spans 510 to 576 (SGKNPVMELN…ALAALEKLFS (67 aa)). Asymmetric dimethylarginine occurs at positions 612 and 617.

As to quaternary structure, interacts with EIF2AK2. Associates with microtubules; it is unsure whether such interaction is direct or indirect. As to expression, isoform 2 is expressed in spermatocytes (at protein level). Expressed in testis, thymus, ovary, liver, kidney, heart, spleen and brain. Expressed in cortex, dentate gyrus and Purkinje cell layer and granule cells of the cerebellum.

The protein localises to the cytoplasm. Its subcellular location is the cytoskeleton. Functionally, involved in spermatogenesis and sperm function. Plays a role in regulation of cell growth. Binds to double-stranded DNA and RNA. Binds most efficiently to poly(I:C) RNA than to poly(dI:dC) DNA. Also binds to single-stranded poly(G) RNA. Binds non-specifically to the mRNA PRM1 3'-UTR and adenovirus VA RNA. The chain is Spermatid perinuclear RNA-binding protein (Strbp) from Mus musculus (Mouse).